The sequence spans 321 residues: Glucokinase (321 aa).

8–13 (GDVGGT) is a binding site for ATP.

Belongs to the bacterial glucokinase family.

Its subcellular location is the cytoplasm. It carries out the reaction D-glucose + ATP = D-glucose 6-phosphate + ADP + H(+). This chain is Glucokinase, found in Salmonella paratyphi B (strain ATCC BAA-1250 / SPB7).